Here is a 198-residue protein sequence, read N- to C-terminus: Inositol diphosphatase DSP4 (198 aa).

Residues 1–23 (MTLESYAGDVHTVPQSENSMEER) form a disordered region. Positions 34 to 188 (NFAMVDNGIF…LKHTPLSFSC (155 aa)) constitute a Tyrosine-protein phosphatase domain. Residues 90 to 102 (FGIERCKEPFVNI) form a WPD loop important for active site topology region. The 1D-myo-inositol hexakisphosphate site is built by asparagine 101 and isoleucine 102. The Phosphocysteine intermediate role is filled by cysteine 126.

Belongs to the protein-tyrosine phosphatase family. Atypical dual-specificity phosphatase Siw14-like subfamily. As to expression, highly expressed in flowers and at lower levels in roots, leaves, stems and siliques.

The catalysed reaction is 5-diphospho-1D-myo-inositol 1,2,3,4,6-pentakisphosphate + H2O = 1D-myo-inositol hexakisphosphate + phosphate + H(+). It catalyses the reaction 1,5-bis(diphospho)-1D-myo-inositol 2,3,4,6-tetrakisphosphate + H2O = 1-diphospho-1D-myo-inositol 2,3,4,5,6-pentakisphosphate + phosphate + 2 H(+). It carries out the reaction 3,5-bis(diphospho)-1D-myo-inositol 1,2,4,6-tetrakisphosphate + H2O = 3-diphospho-1D-myo-inositol 1,2,4,5,6-pentakisphosphate + phosphate + 2 H(+). The enzyme catalyses 6-diphospho-1D-myo-inositol pentakisphosphate + H2O = 1D-myo-inositol hexakisphosphate + phosphate + H(+). In terms of biological role, cleaves the beta-phosphate at the 5-position of soluble inositol pyrophosphates. Has highest activity on 5-diphosphoinositol 1,2,3,4,6-pentakisphosphate (5-InsP(7)), 1,5-bis-diphosphoinositol 2,3,4,6-tetrakisphosphate (1,5-InsP(8)) and 3,5-InsP(8). Acts as a negative regulator of defense responses against the bacterial pathogen Pseudomonas syringae pv tomato strain DC3000. This is Inositol diphosphatase DSP4 from Arabidopsis thaliana (Mouse-ear cress).